A 315-amino-acid polypeptide reads, in one-letter code: Lipoyl synthase (315 aa).

Residues Cys62, Cys67, Cys73, Cys88, Cys92, Cys95, and Ser302 each contribute to the [4Fe-4S] cluster site. The Radical SAM core domain occupies 74–291 (FGKGTATFMI…ETEALRMGFR (218 aa)).

This sequence belongs to the radical SAM superfamily. Lipoyl synthase family. [4Fe-4S] cluster is required as a cofactor.

The protein localises to the cytoplasm. It catalyses the reaction [[Fe-S] cluster scaffold protein carrying a second [4Fe-4S](2+) cluster] + N(6)-octanoyl-L-lysyl-[protein] + 2 oxidized [2Fe-2S]-[ferredoxin] + 2 S-adenosyl-L-methionine + 4 H(+) = [[Fe-S] cluster scaffold protein] + N(6)-[(R)-dihydrolipoyl]-L-lysyl-[protein] + 4 Fe(3+) + 2 hydrogen sulfide + 2 5'-deoxyadenosine + 2 L-methionine + 2 reduced [2Fe-2S]-[ferredoxin]. It participates in protein modification; protein lipoylation via endogenous pathway; protein N(6)-(lipoyl)lysine from octanoyl-[acyl-carrier-protein]: step 2/2. Functionally, catalyzes the radical-mediated insertion of two sulfur atoms into the C-6 and C-8 positions of the octanoyl moiety bound to the lipoyl domains of lipoate-dependent enzymes, thereby converting the octanoylated domains into lipoylated derivatives. The protein is Lipoyl synthase of Azoarcus sp. (strain BH72).